The following is a 334-amino-acid chain: Thioredoxin reductase (334 aa).

FAD-binding positions include 11-14 (SGAG), 40-41 (TA), glutamine 45, asparagine 54, cysteine 148, aspartate 294, and 301-303 (RQA). Residues cysteine 145 and cysteine 148 are joined by a disulfide bond.

Belongs to the class-II pyridine nucleotide-disulfide oxidoreductase family. Homodimer. Requires FAD as cofactor.

The enzyme catalyses [thioredoxin]-dithiol + NADP(+) = [thioredoxin]-disulfide + NADPH + H(+). In terms of biological role, component of the thioredoxin-thioredoxin reductase system which may be involved in biosynthesis of penicillins and cephalosporins and may be important in determining the thiol-disulfide redox balance. In Penicillium chrysogenum (Penicillium notatum), this protein is Thioredoxin reductase (TRR1).